The following is a 551-amino-acid chain: Cytochrome P450 monooxygenase sdnQ (551 aa).

Positions 1-23 (MDDPSIASGFQQGTGRTTGANGT) are disordered. Positions 8–23 (SGFQQGTGRTTGANGT) are enriched in polar residues. N-linked (GlcNAc...) asparagine glycosylation occurs at asparagine 21. A helical transmembrane segment spans residues 41 to 57 (CIGTSLLVALLTTIIIY). Cysteine 491 is a heme binding site.

This sequence belongs to the cytochrome P450 family. It depends on heme as a cofactor.

The protein localises to the membrane. It participates in antibiotic biosynthesis. Its function is as follows. Cytochrome P450 monooxygenase; part of the gene cluster that mediates the biosynthesis of sordarin and hypoxysordarin, glycoside antibiotics with a unique tetracyclic diterpene aglycone structure. First, the geranylgeranyl diphosphate synthase sdnC constructs GGDP from farnesyl diphosphate and isopentenyl diphosphate. The diterpene cyclase sdnA then catalyzes the cyclization of GGDP to afford cycloaraneosene. Cycloaraneosene is then hydroxylated four times by the putative cytochrome P450 monooxygenases sdnB, sdnE, sdnF and sdnH to give a hydroxylated cycloaraneosene derivative such as cycloaraneosene-8,9,13,19-tetraol. Although the order of the hydroxylations is unclear, at least C8, C9 and C13 of the cycloaraneosene skeleton are hydroxylated before the sordaricin formation. Dehydration of the 13-hydroxy group of the hydroxylated cycloaraneosene derivative might be catalyzed by an unassigned hypothetical protein such as sdnG and sdnP to construct the cyclopentadiene moiety. The FAD-dependent oxidoreductase sdnN is proposed to catalyze the oxidation at C9 of the hydroxylated cycloaraneosene derivative and also catalyze the Baeyer-Villiger oxidation to give the lactone intermediate. The presumed lactone intermediate would be hydrolyzed to give an acrolein moiety and a carboxylate moiety. Then, [4+2]cycloaddition would occur between the acrolein moiety and the cyclopentadiene moiety to give sordaricin. SdnN might also be involved in the [4+2]cycloaddition after the hypothesized oxidation to accommodate the oxidized product and prompt the [4+2]cycloaddition. GDP-6-deoxy-D-altrose may be biosynthesized from GDP-D-mannose by the putative GDP-mannose-4,6-dehydratase sdnI and the short-chain dehydrogenase sdnK. The glycosyltransferase sdnJ catalyzes the attachment of 6-deoxy-D-altrose onto the 19-hydroxy group of sordaricin to give 4'-O-demethylsordarin. The methyltransferase sdnD would complete the biosynthesis of sordarin. Sordarin can be further modified into hypoxysordarin. The unique acyl chain at the 3'-hydroxy group of hypoxysordarin would be constructed by an iterative type I PKS sdnO and the trans-acting polyketide methyltransferase sdnL. SdnL would be responsible for the introduction of an alpha-methyl group of the polyketide chain. Alternatively, the beta-lactamase-like protein sdnR might be responsible for the cleavage and transfer of the polyketide chain from the PKS sdnO to sordarin. Two putative cytochrome P450 monooxygenases, sdnQ and sdnT, might catalyze the epoxidations of the polyketide chain to complete the biosynthesis of hypoxysordarin. Transcriptional regulators sdnM and sdnS are presumably encoded for the transcriptional regulation of the expression of the sdn gene cluster. The protein is Cytochrome P450 monooxygenase sdnQ of Sordaria araneosa (Pleurage araneosa).